The primary structure comprises 579 residues: XK-related protein 7 (579 aa).

Residues 1-18 show a composition bias toward low complexity; sequence MAAKSDGAAASAGPDPEG. Positions 1 to 40 are disordered; that stretch reads MAAKSDGAAASAGPDPEGAAGGARGSAGGRGEAAAAAGPP. Residues 19 to 31 show a composition bias toward gly residues; the sequence is AAGGARGSAGGRG. 2 helical membrane-spanning segments follow: residues 59–79 and 89–109; these read WVLC…WLAA and YFSL…LLSF. The segment at 146 to 165 is disordered; the sequence is GAFRTKEGSPEPGPQPAPSS. 5 helical membrane-spanning segments follow: residues 260-280, 314-334, 355-375, 384-404, and 415-435; these read LLPA…LASY, GLAF…CIVG, GEEI…WFNV, MTLY…FWYS, and LIMV…MCVY. A disordered region spans residues 466-510; that stretch reads ADAITSPPRSLPRTTGAERDGASAGERAGTPTPPVFQVRPGLPPT.

The protein belongs to the XK family.

The protein resides in the cell membrane. This chain is XK-related protein 7 (XKR7), found in Pan troglodytes (Chimpanzee).